Reading from the N-terminus, the 554-residue chain is MASQVSQMPSSSPLSSNKDEMRPKADFQPSIWGDLFLNCPDKNIDAETEKRHQQLKEEVRKMIVAPMANSTQKLAFIDSVQRLGVSYHFTKEIEDELENIYHNNNDAENDLYTTSLRFRLLREHGFNVSCDVFNKFKDEQGNFKSSVTSDVRGLLELYQASYLRVHGEDILDEAISFTTNHLSLAVASLDYPLSEEVSHALKQSIRRGLPRVEARHYLSVYQDIESHNKVLLEFAKIDFNMVQLLHRKELSEISRWWKDLDFQRKLPYARDRVVEGYFWISGVYFEPQYSLGRKMLTKVIAMASIVDDTYDSYATYEELIPYTKAIERWDIKCIDELPEYMKPSYKALLDVYEEMEQLVAKHGRQYRVEYAKNAMIRLAQSYLVEARWTLQNYKPSFEEFKANALPTCGYAMLAITSFVGMGDIVTPETFKWAANDPKIIQASTIICRFMDDVAEHKFKHRREDDCSAIECYMEEYGVTAQEAYDVFNKHVESAWKDVNKEFLKPTEMPTEVLNRSLNLARVMDVLYREGDGYTYVGKAAKGGITSLLIEPVAL.

Over residues 1-16 (MASQVSQMPSSSPLSS) the composition is skewed to low complexity. A disordered region spans residues 1-23 (MASQVSQMPSSSPLSSNKDEMRP). 3 residues coordinate Mg(2+): Asp307, Asp311, and Asp451. The DDXXD motif signature appears at 307-311 (DDTYD).

It belongs to the terpene synthase family. The cofactor is Mg(2+).

The enzyme catalyses (2E,6E)-farnesyl diphosphate = (1S,8aR)-delta-cadinene + diphosphate. It participates in secondary metabolite biosynthesis; terpenoid biosynthesis. Its function is as follows. Responsible for the cyclization of trans,trans-farnesyl diphosphate (FPP) to (+)-delta cadinene. The polypeptide is (+)-delta-cadinene synthase isozyme XC14 (Gossypium arboreum (Tree cotton)).